Reading from the N-terminus, the 322-residue chain is Thioredoxin reductase (322 aa).

FAD contacts are provided by residues 11 to 14 (SGPA), 40 to 41 (IA), Gln-45, Asn-54, Val-87, and Cys-145. A disulfide bridge connects residues Cys-142 and Cys-145. Ser-192 carries the post-translational modification Phosphoserine. At Thr-278 the chain carries Phosphothreonine. Position 279 is a phosphoserine (Ser-279). FAD-binding positions include Asp-288 and 295–297 (RQA).

The protein belongs to the class-II pyridine nucleotide-disulfide oxidoreductase family. As to quaternary structure, homodimer. FAD is required as a cofactor.

The protein localises to the cytoplasm. The enzyme catalyses [thioredoxin]-dithiol + NADP(+) = [thioredoxin]-disulfide + NADPH + H(+). The polypeptide is Thioredoxin reductase (trr1) (Schizosaccharomyces pombe (strain 972 / ATCC 24843) (Fission yeast)).